Reading from the N-terminus, the 141-residue chain is Sigma factor binding protein 2, chloroplastic (141 aa).

Over residues 1–20 the composition is skewed to polar residues; it reads MDQSSSTLLINQRKSSSSPT. Residues 1-36 are disordered; it reads MDQSSSTLLINQRKSSSSPTRIPPKQKRKSTTTHKP. A chloroplast-targeting transit peptide spans 1–38; sequence MDQSSSTLLINQRKSSSSPTRIPPKQKRKSTTTHKPIK. A Bipartite nuclear localization signal motif is present at residues 13 to 29; the sequence is RKSSSSPTRIPPKQKRK. A compositionally biased stretch (basic residues) spans 24–36; sequence PKQKRKSTTTHKP. A VQ motif is present at residues 55–64; sequence FRELVQELTG.

In terms of assembly, interacts with sigma factors in chloroplast. Interacts with WRKY33 in the nucleus.

It is found in the plastid. Its subcellular location is the chloroplast. It localises to the nucleus. Functions as activator of WRKY33 in plant defense against necrotrophic pathogens by stimulating the DNA-binding activity of WRKY33. This chain is Sigma factor binding protein 2, chloroplastic (SIB2), found in Arabidopsis thaliana (Mouse-ear cress).